Reading from the N-terminus, the 35-residue chain is U2-agatoxin-Aop1a (35 aa).

Intrachain disulfides connect C3-C19, C10-C24, and C18-C34. L35 bears the Leucine amide mark.

It belongs to the neurotoxin 01 (U2-agtx) family. Expressed by the venom gland.

Its subcellular location is the secreted. Insect-selective toxin causing rapid but reversible paralysis in crickets. Suppresses the excitatory postsynaptic potentials evoked in lobster neuromuscular synaptic preparations, possibly by blocking the presynaptic calcium channel (Cav). Induces instantaneous reversible paralysis when injected into crickets. This Allagelena opulenta (Funnel weaving spider) protein is U2-agatoxin-Aop1a.